We begin with the raw amino-acid sequence, 436 residues long: Tol-Pal system protein TolB (436 aa).

Positions M1–A19 are cleaved as a signal peptide.

It belongs to the TolB family. In terms of assembly, the Tol-Pal system is composed of five core proteins: the inner membrane proteins TolA, TolQ and TolR, the periplasmic protein TolB and the outer membrane protein Pal. They form a network linking the inner and outer membranes and the peptidoglycan layer.

Its subcellular location is the periplasm. Its function is as follows. Part of the Tol-Pal system, which plays a role in outer membrane invagination during cell division and is important for maintaining outer membrane integrity. This Rhizobium etli (strain ATCC 51251 / DSM 11541 / JCM 21823 / NBRC 15573 / CFN 42) protein is Tol-Pal system protein TolB.